Here is a 180-residue protein sequence, read N- to C-terminus: Transcription factor IBH1-like 1 (180 aa).

One can recognise a bHLH domain in the interval Lys-110–Leu-160.

This sequence belongs to the bHLH protein family.

It localises to the nucleus. Its function is as follows. Functions redundandly with IBH1/BHLH158 in a regulation node known as the incoherent feed-forward loop (FFL). Acts as transcriptional repressor that negatively regulates cell and organ elongation in response to gibberellin (GA) and brassinosteroid (BR) signaling. The polypeptide is Transcription factor IBH1-like 1 (Arabidopsis thaliana (Mouse-ear cress)).